We begin with the raw amino-acid sequence, 400 residues long: Tektin-B1 (400 aa).

3 coiled-coil regions span residues 35 to 81 (TRLS…AKAL), 236 to 294 (FALR…LENR), and 310 to 353 (GLVN…LELK).

It belongs to the tektin family. In terms of assembly, may form a heterodimer with tektin a or exist as a homodimer. In terms of tissue distribution, cilia and flagella.

It is found in the cytoplasm. It localises to the cytoskeleton. Structural component of ciliary and flagellar microtubules. This Strongylocentrotus purpuratus (Purple sea urchin) protein is Tektin-B1.